A 194-amino-acid chain; its full sequence is Probable molybdenum cofactor guanylyltransferase (194 aa).

Residues 8-10, Lys-20, and Asp-99 each bind GTP; that span reads LAG. Residue Asp-99 participates in Mg(2+) binding.

This sequence belongs to the MobA family. Requires Mg(2+) as cofactor.

The protein localises to the cytoplasm. It catalyses the reaction Mo-molybdopterin + GTP + H(+) = Mo-molybdopterin guanine dinucleotide + diphosphate. In terms of biological role, transfers a GMP moiety from GTP to Mo-molybdopterin (Mo-MPT) cofactor (Moco or molybdenum cofactor) to form Mo-molybdopterin guanine dinucleotide (Mo-MGD) cofactor. The chain is Probable molybdenum cofactor guanylyltransferase from Synechococcus elongatus (strain ATCC 33912 / PCC 7942 / FACHB-805) (Anacystis nidulans R2).